A 240-amino-acid polypeptide reads, in one-letter code: ATP-dependent dethiobiotin synthetase BioD 1 (240 aa).

13-18 is a binding site for ATP; sequence DVGKTV. T17 serves as a coordination point for Mg(2+). K38 is an active-site residue. S42 provides a ligand contact to substrate. ATP-binding positions include D55, 116–119, 176–177, 205–207, and E212; these read EGAG, NE, and PYL. Residues D55 and E116 each contribute to the Mg(2+) site.

The protein belongs to the dethiobiotin synthetase family. Homodimer. Mg(2+) is required as a cofactor.

The protein resides in the cytoplasm. The enzyme catalyses (7R,8S)-7,8-diammoniononanoate + CO2 + ATP = (4R,5S)-dethiobiotin + ADP + phosphate + 3 H(+). It participates in cofactor biosynthesis; biotin biosynthesis; biotin from 7,8-diaminononanoate: step 1/2. Catalyzes a mechanistically unusual reaction, the ATP-dependent insertion of CO2 between the N7 and N8 nitrogen atoms of 7,8-diaminopelargonic acid (DAPA, also called 7,8-diammoniononanoate) to form a ureido ring. This chain is ATP-dependent dethiobiotin synthetase BioD 1, found in Yersinia pestis.